Here is a 370-residue protein sequence, read N- to C-terminus: Cytochrome b (370 aa).

4 consecutive transmembrane segments (helical) span residues 25 to 45 (FGSM…FLAV), 69 to 90 (WMMQ…YIHI), 105 to 125 (WLSG…GYVL), and 170 to 190 (FFAL…LHIL). Positions 75 and 89 each coordinate heme b. Residues His-174 and His-188 each contribute to the heme b site. His-193 contacts a ubiquinone. 4 helical membrane passes run 218-238 (YKDM…VSFF), 280-300 (LGGA…PFTH), 312-332 (FMQL…WTAT), and 339-358 (FTTI…ISNP).

It belongs to the cytochrome b family. In terms of assembly, the cytochrome bc1 complex contains 3 respiratory subunits (MT-CYB, CYC1 and UQCRFS1), 2 core proteins (UQCRC1 and UQCRC2) and probably 6 low-molecular weight proteins. The cofactor is heme b.

It is found in the mitochondrion inner membrane. In terms of biological role, component of the ubiquinol-cytochrome c reductase complex (complex III or cytochrome b-c1 complex) that is part of the mitochondrial respiratory chain. The b-c1 complex mediates electron transfer from ubiquinol to cytochrome c. Contributes to the generation of a proton gradient across the mitochondrial membrane that is then used for ATP synthesis. This chain is Cytochrome b (MT-CYB), found in Chilabothrus strigilatus fosteri (Bimini Island boa constrictor).